A 418-amino-acid chain; its full sequence is NADH-quinone oxidoreductase subunit D (418 aa).

This sequence belongs to the complex I 49 kDa subunit family. NDH-1 is composed of 14 different subunits. Subunits NuoB, C, D, E, F, and G constitute the peripheral sector of the complex.

It localises to the cell inner membrane. The enzyme catalyses a quinone + NADH + 5 H(+)(in) = a quinol + NAD(+) + 4 H(+)(out). NDH-1 shuttles electrons from NADH, via FMN and iron-sulfur (Fe-S) centers, to quinones in the respiratory chain. The immediate electron acceptor for the enzyme in this species is believed to be ubiquinone. Couples the redox reaction to proton translocation (for every two electrons transferred, four hydrogen ions are translocated across the cytoplasmic membrane), and thus conserves the redox energy in a proton gradient. In Methylacidiphilum infernorum (isolate V4) (Methylokorus infernorum (strain V4)), this protein is NADH-quinone oxidoreductase subunit D.